Here is a 690-residue protein sequence, read N- to C-terminus: Elongation factor G (690 aa).

A tr-type G domain is found at 8–282 (EKTRNIGIMA…AVVAYMPSPL (275 aa)). GTP is bound by residues 17–24 (AHIDAGKT), 81–85 (DTPGH), and 135–138 (NKMD).

It belongs to the TRAFAC class translation factor GTPase superfamily. Classic translation factor GTPase family. EF-G/EF-2 subfamily.

Its subcellular location is the cytoplasm. In terms of biological role, catalyzes the GTP-dependent ribosomal translocation step during translation elongation. During this step, the ribosome changes from the pre-translocational (PRE) to the post-translocational (POST) state as the newly formed A-site-bound peptidyl-tRNA and P-site-bound deacylated tRNA move to the P and E sites, respectively. Catalyzes the coordinated movement of the two tRNA molecules, the mRNA and conformational changes in the ribosome. This chain is Elongation factor G, found in Alkaliphilus oremlandii (strain OhILAs) (Clostridium oremlandii (strain OhILAs)).